Here is a 298-residue protein sequence, read N- to C-terminus: Epimerase family protein SSP1921 (298 aa).

Belongs to the NAD(P)-dependent epimerase/dehydratase family. SDR39U1 subfamily.

The protein is Epimerase family protein SSP1921 of Staphylococcus saprophyticus subsp. saprophyticus (strain ATCC 15305 / DSM 20229 / NCIMB 8711 / NCTC 7292 / S-41).